Here is a 183-residue protein sequence, read N- to C-terminus: ATP synthase subunit delta (183 aa).

The protein belongs to the ATPase delta chain family. In terms of assembly, F-type ATPases have 2 components, F(1) - the catalytic core - and F(0) - the membrane proton channel. F(1) has five subunits: alpha(3), beta(3), gamma(1), delta(1), epsilon(1). F(0) has three main subunits: a(1), b(2) and c(10-14). The alpha and beta chains form an alternating ring which encloses part of the gamma chain. F(1) is attached to F(0) by a central stalk formed by the gamma and epsilon chains, while a peripheral stalk is formed by the delta and b chains.

It is found in the cell inner membrane. Its function is as follows. F(1)F(0) ATP synthase produces ATP from ADP in the presence of a proton or sodium gradient. F-type ATPases consist of two structural domains, F(1) containing the extramembraneous catalytic core and F(0) containing the membrane proton channel, linked together by a central stalk and a peripheral stalk. During catalysis, ATP synthesis in the catalytic domain of F(1) is coupled via a rotary mechanism of the central stalk subunits to proton translocation. In terms of biological role, this protein is part of the stalk that links CF(0) to CF(1). It either transmits conformational changes from CF(0) to CF(1) or is implicated in proton conduction. The chain is ATP synthase subunit delta from Chloroherpeton thalassium (strain ATCC 35110 / GB-78).